The sequence spans 816 residues: Larval serum protein 1 alpha chain (816 aa).

A signal peptide spans 1–16 (MKFAIAFLACVAVVTA).

The protein belongs to the hemocyanin family. As to quaternary structure, heterohexamer, composed of three subunits, alpha, beta and gamma. Larval hemolymph.

The protein resides in the secreted. It localises to the extracellular space. Its function is as follows. Larval storage protein (LSP) which may serve as a store of amino acids for synthesis of adult proteins. This Drosophila melanogaster (Fruit fly) protein is Larval serum protein 1 alpha chain (Lsp1alpha).